A 159-amino-acid chain; its full sequence is Succinate dehydrogenase [ubiquinone] cytochrome b small subunit, mitochondrial (159 aa).

The transit peptide at 1–56 (MAVLWRLSAVCGAQGGRALLLRTPVVRPAHISAFLQDRPIPEWCGVQHIHLSPGHH) directs the protein to the mitochondrion. Residues 57-63 (SGSKAAS) are Mitochondrial matrix-facing. Residues 64–85 (LHWTSERVVSVLLLGLLPAAYL) traverse the membrane as a helical segment. The Mitochondrial intermembrane segment spans residues 86–90 (NPCSA). Residues 91-111 (MDYSLAATLTLHGHWGLGQVV) traverse the membrane as a helical segment. Histidine 102 is a heme b binding site. The Mitochondrial matrix portion of the chain corresponds to 112–120 (TDYVHGDAS). Tyrosine 114 contacts a ubiquinone. A helical transmembrane segment spans residues 121 to 142 (QKAAKAGLLALSALTFAGLCYF). The Mitochondrial intermembrane portion of the chain corresponds to 143 to 159 (NYHDVGICKAVAMLWKL).

Belongs to the CybS family. As to quaternary structure, component of complex II composed of four subunits: the flavoprotein (FP) SDHA, iron-sulfur protein (IP) SDHB, and a cytochrome b560 composed of SDHC and SDHD.

It is found in the mitochondrion inner membrane. It functions in the pathway carbohydrate metabolism; tricarboxylic acid cycle. Its function is as follows. Membrane-anchoring subunit of succinate dehydrogenase (SDH) that is involved in complex II of the mitochondrial electron transport chain and is responsible for transferring electrons from succinate to ubiquinone (coenzyme Q). SDH also oxidizes malate to the non-canonical enol form of oxaloacetate, enol-oxaloacetate. Enol-oxaloacetate, which is a potent inhibitor of the succinate dehydrogenase activity, is further isomerized into keto-oxaloacetate. This Pongo abelii (Sumatran orangutan) protein is Succinate dehydrogenase [ubiquinone] cytochrome b small subunit, mitochondrial (SDHD).